Consider the following 611-residue polypeptide: Zinc metalloproteinase-disintegrin-like MTP9 (611 aa).

An N-terminal signal peptide occupies residues 1 to 20 (MIEVLLVTICFTVFPYQGSS). A propeptide spanning residues 21–191 (IILESGNVND…DEPIEKISQL (171 aa)) is cleaved from the precursor. The Peptidase M12B domain occupies 205 to 401 (KYIELYVVVD…VRPQCILNKP (197 aa)). Glutamate 208 contributes to the Ca(2+) binding site. Residue asparagine 282 is glycosylated (N-linked (GlcNAc...) asparagine). Aspartate 292 is a Ca(2+) binding site. Cystine bridges form between cysteine 316–cysteine 396, cysteine 356–cysteine 380, and cysteine 358–cysteine 363. Histidine 341, histidine 345, and histidine 351 together coordinate Zn(2+). Residues cysteine 396, asparagine 399, asparagine 414, phenylalanine 416, glutamate 418, glutamate 421, and aspartate 424 each coordinate Ca(2+). The Disintegrin domain occupies 409–493 (PPVCGNYFVE…ECPTDSFQRN (85 aa)). Cystine bridges form between cysteine 412/cysteine 441, cysteine 423/cysteine 436, cysteine 425/cysteine 431, cysteine 435/cysteine 456, cysteine 447/cysteine 453, cysteine 452/cysteine 478, cysteine 465/cysteine 485, cysteine 472/cysteine 504, cysteine 497/cysteine 509, cysteine 516/cysteine 566, cysteine 531/cysteine 573, cysteine 541/cysteine 575, cysteine 544/cysteine 554, cysteine 561/cysteine 599, and cysteine 593/cysteine 604. Residues 471 to 473 (DCD) carry the D/ECD-tripeptide motif. Ca(2+) contacts are provided by aspartate 473, leucine 474, glutamate 476, and aspartate 488. N-linked (GlcNAc...) asparagine glycosylation is found at asparagine 548 and asparagine 570.

Belongs to the venom metalloproteinase (M12B) family. P-III subfamily. In terms of assembly, monomer. Zn(2+) serves as cofactor. Expressed by the venom gland.

Its subcellular location is the secreted. In terms of biological role, snake venom zinc metalloproteinase that may impair hemostasis in the prey. The protein is Zinc metalloproteinase-disintegrin-like MTP9 of Drysdalia coronoides (White-lipped snake).